Reading from the N-terminus, the 116-residue chain is Endocuticle structural glycoprotein ABD-4 (116 aa).

Residue Gln-1 is modified to Pyrrolidone carboxylic acid. The Chitin-binding type R&amp;R domain maps to 20–92 (DGSYQWNYET…PQGAHFPTPP (73 aa)). A disordered region spans residues 78 to 97 (ENGFVPQGAHFPTPPPIPPA). A glycan (O-linked (GalNAc) threonine; in ADB-4A, ABD-4B and ABD-4C) is linked at Thr-90. Thr-107 carries O-linked (GalNAc) threonine; in ADB-4A and ABD-4B glycosylation. The O-linked (GalNAc) threonine; in ADB-4A glycan is linked to Thr-111. Position 116 is a proline amide (Pro-116).

Post-translationally, 3 variants exists that arise from a sequential glycosylation with N-acetylgalactosamine at three (ABD-4A), two (ABD-4B) or one (ABD-4C) threonine residues.

In terms of biological role, component of the soft endocuticle of migratory locust. The chain is Endocuticle structural glycoprotein ABD-4 from Locusta migratoria (Migratory locust).